The primary structure comprises 212 residues: Thymidylate kinase (212 aa).

ATP is bound at residue 10–17 (GLEGAGKT).

This sequence belongs to the thymidylate kinase family.

The enzyme catalyses dTMP + ATP = dTDP + ADP. Its function is as follows. Phosphorylation of dTMP to form dTDP in both de novo and salvage pathways of dTTP synthesis. This is Thymidylate kinase from Yersinia pseudotuberculosis serotype O:1b (strain IP 31758).